Reading from the N-terminus, the 127-residue chain is Large ribosomal subunit protein bL20 (127 aa).

The protein belongs to the bacterial ribosomal protein bL20 family.

Binds directly to 23S ribosomal RNA and is necessary for the in vitro assembly process of the 50S ribosomal subunit. It is not involved in the protein synthesizing functions of that subunit. In Corynebacterium urealyticum (strain ATCC 43042 / DSM 7109), this protein is Large ribosomal subunit protein bL20.